The chain runs to 401 residues: Tryptophan synthase beta chain (401 aa).

K88 is subject to N6-(pyridoxal phosphate)lysine.

It belongs to the TrpB family. As to quaternary structure, tetramer of two alpha and two beta chains. Pyridoxal 5'-phosphate serves as cofactor.

It carries out the reaction (1S,2R)-1-C-(indol-3-yl)glycerol 3-phosphate + L-serine = D-glyceraldehyde 3-phosphate + L-tryptophan + H2O. It functions in the pathway amino-acid biosynthesis; L-tryptophan biosynthesis; L-tryptophan from chorismate: step 5/5. In terms of biological role, the beta subunit is responsible for the synthesis of L-tryptophan from indole and L-serine. The protein is Tryptophan synthase beta chain of Shewanella denitrificans (strain OS217 / ATCC BAA-1090 / DSM 15013).